The sequence spans 248 residues: NAD(P)H-quinone oxidoreductase subunit K (248 aa).

4 residues coordinate [4Fe-4S] cluster: Cys66, Cys67, Cys131, and Cys162.

It belongs to the complex I 20 kDa subunit family. NDH-1 can be composed of about 15 different subunits; different subcomplexes with different compositions have been identified which probably have different functions. It depends on [4Fe-4S] cluster as a cofactor.

It localises to the cellular thylakoid membrane. The enzyme catalyses a plastoquinone + NADH + (n+1) H(+)(in) = a plastoquinol + NAD(+) + n H(+)(out). It carries out the reaction a plastoquinone + NADPH + (n+1) H(+)(in) = a plastoquinol + NADP(+) + n H(+)(out). Its function is as follows. NDH-1 shuttles electrons from an unknown electron donor, via FMN and iron-sulfur (Fe-S) centers, to quinones in the respiratory and/or the photosynthetic chain. The immediate electron acceptor for the enzyme in this species is believed to be plastoquinone. Couples the redox reaction to proton translocation, and thus conserves the redox energy in a proton gradient. Cyanobacterial NDH-1 also plays a role in inorganic carbon-concentration. The protein is NAD(P)H-quinone oxidoreductase subunit K of Synechococcus sp. (strain WH7803).